The sequence spans 249 residues: MSPPTVPPTGVDGVSAYLMKKRHTHKKQRRKPTFLTHRNIVGCRIQHGWKEGNEPVEQWKGTVLEQVSVKPTLYIIKYDGKDSVYGLELHRDKRVLALEILPERVPSPRIDSRLADSLVGKAVGHVFEGEHGKKDEWKGMVLARAPIMDTWFYITYEKDPVLYMYTLLDDYKDGDLRIIPDSNYYFPAAEQEPGEVLDSLVGKQVEHAKDDGSKRTGIFIHQVVAKPSVYFIKFDDDIHIYVYGLVKTP.

3 tudor-like domain regions span residues 41 to 90, 119 to 168, and 201 to 246; these read VGCR…LELH, VGKA…YTLL, and VGKQ…YGLV. Histone H3K4me3 and H3R8me2a binding stretches follow at residues 80–85, E128, and 237–239; these read GKDSVY and DIH.

The protein belongs to the SPIN/STSY family. As to quaternary structure, interacts with C11orf84/SPINDOC. Associates with chromatin.

The protein resides in the cytoplasm. Its subcellular location is the nucleus. Functionally, binds to acetylated and methylated histones, including H3K4me3 and H4K20me3, probably acting as a histone reader that recognizes chromatin marks to mediate downstream cellular effects. Promotes canonical WNT signaling, and is involved in the down-regulation of cell proliferation. This chain is Spindlin-4 (Spin4), found in Mus musculus (Mouse).